The chain runs to 380 residues: Outer membrane protein assembly factor BamB (380 aa).

The signal sequence occupies residues methionine 1 to glycine 18. A lipid anchor (N-palmitoyl cysteine) is attached at cysteine 19. Cysteine 19 carries S-diacylglycerol cysteine lipidation.

Belongs to the BamB family. Part of the Bam complex.

The protein localises to the cell outer membrane. Its function is as follows. Part of the outer membrane protein assembly complex, which is involved in assembly and insertion of beta-barrel proteins into the outer membrane. This chain is Outer membrane protein assembly factor BamB, found in Pseudomonas aeruginosa (strain ATCC 15692 / DSM 22644 / CIP 104116 / JCM 14847 / LMG 12228 / 1C / PRS 101 / PAO1).